Consider the following 115-residue polypeptide: Macroconotoxin Mu8.1 (115 aa).

The first 21 residues, 1-21 (MDMKMTFSGLVLVVLVTTVVG), serve as a signal peptide directing secretion. Residues 22–26 (SSVRR) constitute a propeptide that is removed on maturation. 5 disulfide bridges follow: cysteine 36–cysteine 77, cysteine 44–cysteine 60, cysteine 48–cysteine 56, cysteine 83–cysteine 115, and cysteine 87–cysteine 97. Glutamate 40 provides a ligand contact to Zn(2+). Position 68 (histidine 68) interacts with Zn(2+).

Mostly found as a homodimer in solution; non-covalently bound. In terms of tissue distribution, expressed by the venom duct.

Its subcellular location is the secreted. Modestly and reversibly inhibits Cav2.3/CACNA1E (IC(50)=5.8 uM) recombinantly expressed in HEK293 cells without affecting the voltage dependence of activation. In mouse DRG sensory neurons, modulates depolarization-induced calcium influx. The chain is Macroconotoxin Mu8.1 from Conus mucronatus (Pointed cone).